We begin with the raw amino-acid sequence, 266 residues long: Non-structural maintenance of chromosomes element 1 homolog (266 aa).

The segment at 1–102 is interaction with NSMCE3; the sequence is MQGSTRRAGA…SVSKMATDFA (102 aa). The RING-type; atypical zinc finger occupies 191–232; the sequence is CNICHSLLIQGQSCETCGIRMHLPCVAKYFQSTAEPRCPHCN. A disordered region spans residues 246-266; sequence EKEREAGISKSSRKSLRTRQH. Basic residues predominate over residues 256-266; sequence SSRKSLRTRQH.

Belongs to the NSE1 family. In terms of assembly, component of the SMC5-SMC6 complex which consists at least of SMC5, SMC6, NSMCE2, NSMCE1, NSMCE4A or EID3 and NSMCE3. NSMCE1, NSMCE4A or EID3 and NSMCE3 probably form a subcomplex that bridges the head domains of the SMC5-SMC6 heterodimer. Interacts with NSMCE3. Post-translationally, ubiquitinated.

The protein localises to the nucleus. It localises to the chromosome. Its subcellular location is the telomere. The enzyme catalyses S-ubiquitinyl-[E2 ubiquitin-conjugating enzyme]-L-cysteine + [acceptor protein]-L-lysine = [E2 ubiquitin-conjugating enzyme]-L-cysteine + N(6)-ubiquitinyl-[acceptor protein]-L-lysine.. Functionally, RING-type zinc finger-containing E3 ubiquitin ligase that assembles with melanoma antigen protein (MAGE) to catalyze the direct transfer of ubiquitin from E2 ubiquitin-conjugating enzyme to a specific substrate. Within MAGE-RING ubiquitin ligase complex, MAGE stimulates and specifies ubiquitin ligase activity likely through recruitment and/or stabilization of the E2 ubiquitin-conjugating enzyme at the E3:substrate complex. Involved in maintenance of genome integrity, DNA damage response and DNA repair. NSMCE3/MAGEG1 and NSMCE1 ubiquitin ligase are components of SMC5-SMC6 complex and may positively regulate homologous recombination-mediated DNA repair. The protein is Non-structural maintenance of chromosomes element 1 homolog (Nsmce1) of Rattus norvegicus (Rat).